Consider the following 571-residue polypeptide: Urease subunit alpha (571 aa).

The Urease domain maps to Gly-129–Phe-571. Residues His-134, His-136, and Lys-217 each coordinate Ni(2+). An N6-carboxylysine modification is found at Lys-217. His-219 is a substrate binding site. Residues His-246 and His-272 each contribute to the Ni(2+) site. His-320 (proton donor) is an active-site residue. Asp-360 contributes to the Ni(2+) binding site.

It belongs to the metallo-dependent hydrolases superfamily. Urease alpha subunit family. Heterotrimer of UreA (gamma), UreB (beta) and UreC (alpha) subunits. Three heterotrimers associate to form the active enzyme. Ni cation is required as a cofactor. Carboxylation allows a single lysine to coordinate two nickel ions.

The protein localises to the cytoplasm. It catalyses the reaction urea + 2 H2O + H(+) = hydrogencarbonate + 2 NH4(+). Its pathway is nitrogen metabolism; urea degradation; CO(2) and NH(3) from urea (urease route): step 1/1. This chain is Urease subunit alpha, found in Cupriavidus necator (strain ATCC 17699 / DSM 428 / KCTC 22496 / NCIMB 10442 / H16 / Stanier 337) (Ralstonia eutropha).